A 379-amino-acid polypeptide reads, in one-letter code: Putative thylakoid lumen peptidyl-prolyl cis-trans isomerase sll0408 (379 aa).

The signal sequence occupies residues 1-33 (MQIIKTPLGIITRRGLQLSLLSLLLTMLSLTWA). In terms of domain architecture, PPIase cyclophilin-type spans 190–378 (GRATVEMTTN…SGADNLVNGN (189 aa)).

It is found in the cellular thylakoid lumen. The enzyme catalyses [protein]-peptidylproline (omega=180) = [protein]-peptidylproline (omega=0). In terms of biological role, PPIases accelerate the folding of proteins. It catalyzes the cis-trans isomerization of proline imidic peptide bonds in oligopeptides. Required for the assembly and stabilization of PSII. This Synechocystis sp. (strain ATCC 27184 / PCC 6803 / Kazusa) protein is Putative thylakoid lumen peptidyl-prolyl cis-trans isomerase sll0408.